Consider the following 639-residue polypeptide: Chaperone protein DnaK 1 (639 aa).

Threonine 199 is modified (phosphothreonine; by autocatalysis). Over residues 603 to 612 (QQQAQAQQAP) the composition is skewed to low complexity. The tract at residues 603–639 (QQQAQAQQAPGGEGEQEAKQDDNVVDAEFEEVKDEKK) is disordered. The span at 625–639 (NVVDAEFEEVKDEKK) shows a compositional bias: acidic residues.

It belongs to the heat shock protein 70 family.

Functionally, acts as a chaperone. This chain is Chaperone protein DnaK 1, found in Photobacterium profundum (strain SS9).